Here is a 320-residue protein sequence, read N- to C-terminus: o-succinylbenzoate synthase (320 aa).

Lys133 acts as the Proton donor in catalysis. Mg(2+) contacts are provided by Asp161, Glu190, and Asp213. Residue Lys235 is the Proton acceptor of the active site.

This sequence belongs to the mandelate racemase/muconate lactonizing enzyme family. MenC type 1 subfamily. A divalent metal cation is required as a cofactor.

It carries out the reaction (1R,6R)-6-hydroxy-2-succinyl-cyclohexa-2,4-diene-1-carboxylate = 2-succinylbenzoate + H2O. It participates in quinol/quinone metabolism; 1,4-dihydroxy-2-naphthoate biosynthesis; 1,4-dihydroxy-2-naphthoate from chorismate: step 4/7. The protein operates within quinol/quinone metabolism; menaquinone biosynthesis. Converts 2-succinyl-6-hydroxy-2,4-cyclohexadiene-1-carboxylate (SHCHC) to 2-succinylbenzoate (OSB). In Shigella boydii serotype 18 (strain CDC 3083-94 / BS512), this protein is o-succinylbenzoate synthase.